The sequence spans 119 residues: MVPRIFAPAYVSVCLLLLCPREVIAPAGSEPWLCQPAPRCGDKIYNPLEQCCYNDAIVSLSETRQCGPPCTFWPCFELCCLDSFGLTNDFVVKLKVQGVNSQCHSSPISSKCESRRRFP.

The signal sequence occupies residues 1 to 25; the sequence is MVPRIFAPAYVSVCLLLLCPREVIA.

The protein belongs to the IGFL family. As to expression, detected in cerebellum, heart, placenta, spleen, stomach, testis and thymus.

Its subcellular location is the secreted. In terms of biological role, potential ligand of the IGFLR1 cell membrane receptor. The polypeptide is Insulin growth factor-like family member 2 (IGFL2) (Homo sapiens (Human)).